Reading from the N-terminus, the 416-residue chain is Probable endo-beta-1,4-glucanase celB (416 aa).

The first 17 residues, 1 to 17, serve as a signal peptide directing secretion; that stretch reads MIWTLAPFVALLPLVTA. N45, N104, N117, and N135 each carry an N-linked (GlcNAc...) asparagine glycan. Residue E214 is the Nucleophile of the active site. The active-site Proton donor is the E219. N233, N278, N292, and N382 each carry an N-linked (GlcNAc...) asparagine glycan.

Belongs to the glycosyl hydrolase 7 (cellulase C) family.

The protein localises to the secreted. The catalysed reaction is Endohydrolysis of (1-&gt;4)-beta-D-glucosidic linkages in cellulose, lichenin and cereal beta-D-glucans.. Its function is as follows. Has endoglucanase activity on substrates containing beta-1,4 glycosidic bonds, like in carboxymethylcellulose (CMC), hydroxyethylcellulose (HEC) and beta-glucan. Involved in the degradation of complex natural cellulosic substrates. This is Probable endo-beta-1,4-glucanase celB (celB) from Aspergillus flavus (strain ATCC 200026 / FGSC A1120 / IAM 13836 / NRRL 3357 / JCM 12722 / SRRC 167).